Here is a 312-residue protein sequence, read N- to C-terminus: Small ribosomal subunit protein RACK1 (312 aa).

WD repeat units follow at residues 9–42 (GHRG…ISWK), 63–93 (GHTG…RMWD), 105–135 (KHTK…RVWN), 148–180 (GHED…KVWN), 192–222 (GHSN…LLWD), 233–262 (NVES…SVYD), and 279–307 (PSEC…RVWS).

The protein belongs to the WD repeat G protein beta family. Ribosomal protein RACK1 subfamily.

The chain is Small ribosomal subunit protein RACK1 from Leishmania chagasi.